Here is a 254-residue protein sequence, read N- to C-terminus: Thiazole synthase (254 aa).

Residue Lys-95 is the Schiff-base intermediate with DXP of the active site. 1-deoxy-D-xylulose 5-phosphate contacts are provided by residues Gly-156, 182-183, and 204-205; these read AG and NT.

The protein belongs to the ThiG family. As to quaternary structure, homotetramer. Forms heterodimers with either ThiH or ThiS.

Its subcellular location is the cytoplasm. The catalysed reaction is [ThiS sulfur-carrier protein]-C-terminal-Gly-aminoethanethioate + 2-iminoacetate + 1-deoxy-D-xylulose 5-phosphate = [ThiS sulfur-carrier protein]-C-terminal Gly-Gly + 2-[(2R,5Z)-2-carboxy-4-methylthiazol-5(2H)-ylidene]ethyl phosphate + 2 H2O + H(+). Its pathway is cofactor biosynthesis; thiamine diphosphate biosynthesis. Catalyzes the rearrangement of 1-deoxy-D-xylulose 5-phosphate (DXP) to produce the thiazole phosphate moiety of thiamine. Sulfur is provided by the thiocarboxylate moiety of the carrier protein ThiS. In vitro, sulfur can be provided by H(2)S. This is Thiazole synthase from Shewanella baltica (strain OS223).